The primary structure comprises 350 residues: Probable arabinogalactan endo-beta-1,4-galactanase A (350 aa).

Residues 1–16 form the signal peptide; it reads MIYPLLLSALPLLSSA. N-linked (GlcNAc...) asparagine glycosylation is present at Asn128. The Proton donor role is filled by Glu152. The active-site Nucleophile is Glu262.

Belongs to the glycosyl hydrolase 53 family.

It is found in the secreted. It carries out the reaction The enzyme specifically hydrolyzes (1-&gt;4)-beta-D-galactosidic linkages in type I arabinogalactans.. Its function is as follows. Endogalactanase involved in the degradation of plant cell wall polysaccharides, and more particularly of hairy regions of pectin. In Aspergillus tubingensis, this protein is Probable arabinogalactan endo-beta-1,4-galactanase A (galA).